The chain runs to 214 residues: 3,4-dihydroxy-2-butanone 4-phosphate synthase (214 aa).

D-ribulose 5-phosphate is bound by residues 37–38, aspartate 42, 150–154, and glutamate 174; these read RE and RRGHT. Position 38 (glutamate 38) interacts with Mg(2+). Histidine 153 provides a ligand contact to Mg(2+).

It belongs to the DHBP synthase family. In terms of assembly, homodimer. Requires Mg(2+) as cofactor. Mn(2+) is required as a cofactor.

The enzyme catalyses D-ribulose 5-phosphate = (2S)-2-hydroxy-3-oxobutyl phosphate + formate + H(+). It functions in the pathway cofactor biosynthesis; riboflavin biosynthesis; 2-hydroxy-3-oxobutyl phosphate from D-ribulose 5-phosphate: step 1/1. In terms of biological role, catalyzes the conversion of D-ribulose 5-phosphate to formate and 3,4-dihydroxy-2-butanone 4-phosphate. This is 3,4-dihydroxy-2-butanone 4-phosphate synthase from Nitratidesulfovibrio vulgaris (strain DP4) (Desulfovibrio vulgaris).